Here is a 70-residue protein sequence, read N- to C-terminus: U2-agatoxin-Ao1r (70 aa).

The first 20 residues, 1 to 20, serve as a signal peptide directing secretion; it reads MRSIISLILISAMVFSMIAP. The propeptide occupies 21–34; that stretch reads VPEEERLQLSEDER. 3 disulfide bridges follow: cysteine 37–cysteine 53, cysteine 44–cysteine 58, and cysteine 52–cysteine 68. Position 69 is a leucine amide (leucine 69).

Belongs to the neurotoxin 01 (U2-agtx) family. Expressed by the venom gland.

Its subcellular location is the secreted. Insect active toxin causing rapid but reversible paralysis in crickets. No activity shown in mammals. Does not show effect on mammalian voltage-gated calcium channels. The chain is U2-agatoxin-Ao1r from Agelena orientalis (Funnel-web spider).